The primary structure comprises 179 residues: Probable chorismate pyruvate-lyase (179 aa).

Substrate is bound by residues arginine 82, leucine 120, and glutamate 165.

It belongs to the UbiC family.

The protein localises to the cytoplasm. The enzyme catalyses chorismate = 4-hydroxybenzoate + pyruvate. The protein operates within cofactor biosynthesis; ubiquinone biosynthesis. In terms of biological role, removes the pyruvyl group from chorismate, with concomitant aromatization of the ring, to provide 4-hydroxybenzoate (4HB) for the ubiquinone pathway. This chain is Probable chorismate pyruvate-lyase, found in Vibrio vulnificus (strain CMCP6).